A 151-amino-acid chain; its full sequence is Large ribosomal subunit protein bL9 (151 aa).

It belongs to the bacterial ribosomal protein bL9 family.

Binds to the 23S rRNA. This Acidobacterium capsulatum (strain ATCC 51196 / DSM 11244 / BCRC 80197 / JCM 7670 / NBRC 15755 / NCIMB 13165 / 161) protein is Large ribosomal subunit protein bL9.